A 551-amino-acid chain; its full sequence is Membrane protein insertase YidC (551 aa).

The chain crosses the membrane as a helical span at residues 3–23 (ANHIRILLLVTIAIMLISLMG). A compositionally biased stretch (low complexity) spans 30-43 (PSNSSQSQTTQTQQ). The interval 30 to 61 (PSNSSQSQTTQTQQDNSHYNSDTPATTNVSTS) is disordered. The segment covering 44–61 (DNSHYNSDTPATTNVSTS) has biased composition (polar residues). The next 3 membrane-spanning stretches (helical) occupy residues 361-381 (LVGNWGLAIILVTCLIKLIFY), 431-451 (LSGCLPMLIQIPIFISLYWVL), and 504-524 (IMMFLPVIFTFLFASFPSGLV).

Belongs to the OXA1/ALB3/YidC family. Type 1 subfamily. As to quaternary structure, interacts with the Sec translocase complex via SecD. Specifically interacts with transmembrane segments of nascent integral membrane proteins during membrane integration.

The protein localises to the cell inner membrane. Required for the insertion and/or proper folding and/or complex formation of integral membrane proteins into the membrane. Involved in integration of membrane proteins that insert both dependently and independently of the Sec translocase complex, as well as at least some lipoproteins. Aids folding of multispanning membrane proteins. This chain is Membrane protein insertase YidC, found in Francisella philomiragia subsp. philomiragia (strain ATCC 25017 / CCUG 19701 / FSC 153 / O#319-036).